Reading from the N-terminus, the 166-residue chain is MARKVIALAFLLLLTISLSKSNAARVIKYNGGESGGGGGGGGGGGGGGNGSGSGSGYGYNYGKGGGQSGGGQGSGGGGGGGGGGSNGSGSGSGYGYGYGQGNGGAQGQGSGGGGGGGGGGGGGGSGQGSGSGYGYGYGKGGGGGGGGGGDGGGGGGGGSAYVGRHE.

The first 23 residues, 1–23, serve as a signal peptide directing secretion; sequence MARKVIALAFLLLLTISLSKSNA. R2; Tyr-rich repeat units follow at residues 56-62 and 93-99; these read GYGYNYG and GYGYGYG. Positions 105 to 125 are disordered; the sequence is AQGQGSGGGGGGGGGGGGGGS. An R2; Tyr-rich repeat occupies 132–138; that stretch reads GYGYGYG. Residues 144–160 show a composition bias toward gly residues; that stretch reads GGGGGGDGGGGGGGGSA. A disordered region spans residues 144-166; sequence GGGGGGDGGGGGGGGSAYVGRHE.

The protein localises to the secreted. Its subcellular location is the cell wall. Functionally, responsible for plasticity of the cell wall. In Oryza sativa subsp. japonica (Rice), this protein is Putative glycine-rich cell wall structural protein 1 (GRP-1).